Here is a 628-residue protein sequence, read N- to C-terminus: Probable alpha-L-arabinofuranosidase A (628 aa).

Positions 1–25 (MVAFSALSGVSALSLLLCLVQHAHG) are cleaved as a signal peptide. N36, N51, N74, N152, N171, N260, N359, and N493 each carry an N-linked (GlcNAc...) asparagine glycan.

This sequence belongs to the glycosyl hydrolase 51 family.

It localises to the secreted. It carries out the reaction Hydrolysis of terminal non-reducing alpha-L-arabinofuranoside residues in alpha-L-arabinosides.. It participates in glycan metabolism; L-arabinan degradation. In terms of biological role, alpha-L-arabinofuranosidase involved in the degradation of arabinoxylan, a major component of plant hemicellulose. Acts only on small linear 1,5-alpha-linked L-arabinofuranosyl oligosaccharides. The protein is Probable alpha-L-arabinofuranosidase A (abfA) of Aspergillus awamori (Black koji mold).